The sequence spans 101 residues: MIREERLLKVLKAPHISEKSTMVAEKLNTIVFKVATDATKAEIKAAVEKLFEVKVEAVRTLNVVGKTKRTGSRMGRRSDWKKAYVTLVEGQDIDFVGGAAE.

This sequence belongs to the universal ribosomal protein uL23 family. Part of the 50S ribosomal subunit. Contacts protein L29, and trigger factor when it is bound to the ribosome.

In terms of biological role, one of the early assembly proteins it binds 23S rRNA. One of the proteins that surrounds the polypeptide exit tunnel on the outside of the ribosome. Forms the main docking site for trigger factor binding to the ribosome. This Tolumonas auensis (strain DSM 9187 / NBRC 110442 / TA 4) protein is Large ribosomal subunit protein uL23.